Reading from the N-terminus, the 457-residue chain is Argininosuccinate lyase (457 aa).

This sequence belongs to the lyase 1 family. Argininosuccinate lyase subfamily.

Its subcellular location is the cytoplasm. It carries out the reaction 2-(N(omega)-L-arginino)succinate = fumarate + L-arginine. The protein operates within amino-acid biosynthesis; L-arginine biosynthesis; L-arginine from L-ornithine and carbamoyl phosphate: step 3/3. The chain is Argininosuccinate lyase from Escherichia coli O157:H7.